Reading from the N-terminus, the 765-residue chain is AMP deaminase 3 (765 aa).

Phosphoserine occurs at positions 85 and 106. Zn(2+) contacts are provided by His315 and His317. Substrate-binding positions include His317 and 386–391 (KFNSKY). His584 serves as a coordination point for Zn(2+). Glu587 is a binding site for substrate. The Proton acceptor role is filled by His606. Asp661 is a binding site for Zn(2+). Substrate is bound at residue 662–665 (DPMQ).

This sequence belongs to the metallo-dependent hydrolases superfamily. Adenosine and AMP deaminases family. In terms of assembly, homotetramer. It depends on Zn(2+) as a cofactor. In terms of tissue distribution, expressed in adult tissues such as aorta, heart, kidney, lung, muscle and thyroid. Weakly expressed in thyroid and not detected in liver.

It catalyses the reaction AMP + H2O + H(+) = IMP + NH4(+). It participates in purine metabolism; IMP biosynthesis via salvage pathway; IMP from AMP: step 1/1. Functionally, AMP deaminase plays a critical role in energy metabolism. The polypeptide is AMP deaminase 3 (Rattus norvegicus (Rat)).